A 286-amino-acid polypeptide reads, in one-letter code: Bifunctional protein FolD (286 aa).

Residues 164 to 166, Ser-193, and Ile-234 contribute to the NADP(+) site; that span reads GRS.

Belongs to the tetrahydrofolate dehydrogenase/cyclohydrolase family. In terms of assembly, homodimer.

The catalysed reaction is (6R)-5,10-methylene-5,6,7,8-tetrahydrofolate + NADP(+) = (6R)-5,10-methenyltetrahydrofolate + NADPH. It catalyses the reaction (6R)-5,10-methenyltetrahydrofolate + H2O = (6R)-10-formyltetrahydrofolate + H(+). It participates in one-carbon metabolism; tetrahydrofolate interconversion. Functionally, catalyzes the oxidation of 5,10-methylenetetrahydrofolate to 5,10-methenyltetrahydrofolate and then the hydrolysis of 5,10-methenyltetrahydrofolate to 10-formyltetrahydrofolate. This chain is Bifunctional protein FolD, found in Maridesulfovibrio salexigens (strain ATCC 14822 / DSM 2638 / NCIMB 8403 / VKM B-1763) (Desulfovibrio salexigens).